The sequence spans 217 residues: 3,4-dihydroxy-2-butanone 4-phosphate synthase (217 aa).

Residues 37-38 (RE), Asp-42, 150-154 (RGGHT), and Glu-174 each bind D-ribulose 5-phosphate. Residue Glu-38 participates in Mg(2+) binding. A Mg(2+)-binding site is contributed by His-153.

The protein belongs to the DHBP synthase family. In terms of assembly, homodimer. The cofactor is Mg(2+). It depends on Mn(2+) as a cofactor.

The catalysed reaction is D-ribulose 5-phosphate = (2S)-2-hydroxy-3-oxobutyl phosphate + formate + H(+). Its pathway is cofactor biosynthesis; riboflavin biosynthesis; 2-hydroxy-3-oxobutyl phosphate from D-ribulose 5-phosphate: step 1/1. In terms of biological role, catalyzes the conversion of D-ribulose 5-phosphate to formate and 3,4-dihydroxy-2-butanone 4-phosphate. The sequence is that of 3,4-dihydroxy-2-butanone 4-phosphate synthase from Proteus mirabilis (strain HI4320).